The primary structure comprises 173 residues: Mesencephalic astrocyte-derived neurotrophic factor homolog (173 aa).

Positions 1–22 (MKTWYMVVVIGFLATLAQTSLA) are cleaved as a signal peptide. Disulfide bonds link Cys-28/Cys-114, Cys-31/Cys-103, Cys-61/Cys-72, and Cys-148/Cys-151.

The protein belongs to the ARMET family.

The protein resides in the secreted. Its function is as follows. Required during the maturation of the embryonic nervous system for maintenance of neuronal and cuticular connectivity. Essential for maintenance of dopaminergic neurons and dopamine levels. This is Mesencephalic astrocyte-derived neurotrophic factor homolog from Drosophila erecta (Fruit fly).